Consider the following 1222-residue polypeptide: ATP-dependent helicase/nuclease subunit A (1222 aa).

The 457-residue stretch at 39 to 495 (QKRTAQQIEA…ILLKENFRSQ (457 aa)) folds into the UvrD-like helicase ATP-binding domain. 60–67 (ASAGSGKT) serves as a coordination point for ATP. The UvrD-like helicase C-terminal domain maps to 524–810 (QLIAGSHAQT…NLMTIHKSKG (287 aa)).

It belongs to the helicase family. AddA subfamily. Heterodimer of AddA and AddB/RexB. Requires Mg(2+) as cofactor.

The catalysed reaction is Couples ATP hydrolysis with the unwinding of duplex DNA by translocating in the 3'-5' direction.. The enzyme catalyses ATP + H2O = ADP + phosphate + H(+). The heterodimer acts as both an ATP-dependent DNA helicase and an ATP-dependent, dual-direction single-stranded exonuclease. Recognizes the chi site generating a DNA molecule suitable for the initiation of homologous recombination. The AddA nuclease domain is required for chi fragment generation; this subunit has the helicase and 3' -&gt; 5' nuclease activities. The sequence is that of ATP-dependent helicase/nuclease subunit A from Streptococcus pyogenes serotype M3 (strain ATCC BAA-595 / MGAS315).